Consider the following 1170-residue polypeptide: MLWPLLLLALWAWPSAQAGDQDEDTAFDLFSISNINRKTIGAKQFRGPDPSVPAYRFVRFDYIPPVSAEHLGRITEAMRRKEGFFLTASMKQDRRSRGTLLALEGPGATHRQFEIVSNGPADTLDLTYWVDGTQHVISLEDVGLADSQWKNVTVQVTGETYSLYVGCDLMDSFALDEPFYEHLQTERSRMYVTKGAARESHFRGLLQNVYLVFENSVEDLLSKKGCQQSQGAETNAISENTETLHLSPMVTMEHVGPSAEKSPEVCEHSCEELGSMIRELSGLHVIVNQLHENLRKVSNDNQFLWELIGGPPKTRNVSACWQDGRFFAENETWVVDSCTKCTCKKFKTVCHQISCPPATCADPWFVEGECCPSCVHDGEEGWSPWAEWTECSATCGSGTQQRGRSCDVTSNTCLGPSIQTRACSLGRCDHRIRQDGGWSHWSPWSSCSVTCGVGNVTRIRLCNSPVPQMGGRSCKGSGRETKACQGPPCPVDGRWSPWSPWSACTVTCAGGIRERTRVCNSPEPQHGGKDCVGGAKEQQMCNRKSCPIDGCLSNPCFPGAECSSFPDGSWSCGSCPGGFLGNGTHCEDLDECAVVTDVCFATSKAHRCVNTNPGYHCLPCPPRYKGNQPFGVGLEAARTEKQVCEPENPCKDKTHSCHRHAECIYLGHFSDPMYKCECQTGYAGDGLICGEDSDLDGWPNKNLVCATNATYHCVKDNCPLLPNSGQEDFDKDGIGDACDDDDDNDGVSDEKDNCQLLFNPRQFDYDKDEVGDRCDNCPYVHNPAQIDTDNNGEGDACSVDIDGDDVFNERDNCPYVYNTDQRDTDGDGVGDHCDNCPLVHNPDQTDVDNDLVGDQCDNNEDIDEDGHQNNQDNCPHIPNANQADHDRDGQGDACDSDDDNDGIPDDRDNCRLVANPDQEDSDGDRRGDACKDDFDNDSIPDIDDVCPENNAISETDFRNFQMVHLDPKGTTQIDPNWVIRHQGKELVQTANSDPGIAVGFDEFGSVDFSGTFYVNTDRDDDYAGFVFGYQSSSRFYVVMWKQVTQTYWEDQPTRAYGYSGVSLKVVNSTTGTGEHLRNALWHTGNTEGQVRTLWHDPKNIGWKDYTAYRWHLTHRPKTGYIRVLVHEGKQVMADSGPIYDQTYAGGRLGLFVFSQEMVYFSDLKYECRDV.

The N-terminal stretch at 1–18 is a signal peptide; the sequence is MLWPLLLLALWAWPSAQA. Residues 19 to 215 form the Laminin G-like domain; it reads GDQDEDTAFD…LQNVYLVFEN (197 aa). Residues 19 to 232 are heparin-binding; that stretch reads GDQDEDTAFD…KKGCQQSQGA (214 aa). Residues Asn151, Asn316, and Asn330 are each glycosylated (N-linked (GlcNAc...) asparagine). One can recognise a VWFC domain in the interval 318–375; that stretch reads SACWQDGRFFAENETWVVDSCTKCTCKKFKTVCHQISCPPATCADPWFVEGECCPSCV. TSP type-1 domains are found at residues 379–429, 435–490, and 492–547; these read EEGW…GRCD, DGGW…PPCP, and DGRW…KSCP. 26 cysteine pairs are disulfide-bonded: Cys391/Cys423, Cys395/Cys428, Cys406/Cys413, Cys447/Cys484, Cys451/Cys489, Cys462/Cys474, Cys504/Cys541, Cys508/Cys546, Cys519/Cys531, Cys551/Cys562, Cys556/Cys572, Cys575/Cys586, Cys592/Cys608, Cys599/Cys617, Cys620/Cys644, Cys650/Cys663, Cys657/Cys676, Cys678/Cys689, Cys705/Cys713, Cys718/Cys738, Cys754/Cys774, Cys777/Cys797, Cys813/Cys833, Cys836/Cys856, Cys874/Cys894, and Cys910/Cys930. An N-linked (GlcNAc...) asparagine glycan is attached at Asn455. One can recognise an EGF-like 1 domain in the interval 547–587; the sequence is PIDGCLSNPCFPGAECSSFPDGSWSCGSCPGGFLGNGTHCE. Asn582 is a glycosylation site (N-linked (GlcNAc...) asparagine). An EGF-like 2 domain is found at 646-690; sequence PENPCKDKTHSCHRHAECIYLGHFSDPMYKCECQTGYAGDGLICG. 8 TSP type-3 repeats span residues 691–726, 727–762, 763–785, 786–821, 822–844, 845–882, 883–918, and 919–954; these read EDSD…NSGQ, EDFD…NPRQ, FDYD…NPAQ, IDTD…NTDQ, RDTD…NPDQ, TDVD…NANQ, ADHD…NPDQ, and EDSD…AISE. A glycan (N-linked (GlcNAc...) asparagine) is linked at Asn708. Positions 731 to 750 are disordered; that stretch reads KDGIGDACDDDDDNDGVSDE. Acidic residues predominate over residues 737 to 747; sequence ACDDDDDNDGV. The disordered stretch occupies residues 841–944; the sequence is NPDQTDVDND…DNDSIPDIDD (104 aa). Composition is skewed to acidic residues over residues 845–864 and 894–903; these read TDVD…DIDE and CDSDDDNDGI. Basic and acidic residues predominate over residues 923–933; it reads GDRRGDACKDD. The Cell attachment site signature appears at 926-928; the sequence is RGD. The segment covering 934–944 has biased composition (acidic residues); it reads FDNDSIPDIDD. Asn936 and Asn1067 each carry an N-linked (GlcNAc...) asparagine glycan. Cys946 and Cys1167 are oxidised to a cystine. One can recognise a TSP C-terminal domain in the interval 958–1170; it reads RNFQMVHLDP…SDLKYECRDV (213 aa).

The protein belongs to the thrombospondin family. Homotrimer; disulfide-linked. Can bind to fibrinogen, fibronectin, laminin and type V collagen. Interacts (via the TSP type I repeats) with CD36; the interaction conveys an antiangiogenic effect. Interacts (via the TSP type I repeats) with HRG; the interaction blocks the antiangiogenic effect of THBS2 with CD36.

Adhesive glycoprotein that mediates cell-to-cell and cell-to-matrix interactions. Ligand for CD36 mediating antiangiogenic properties. This is Thrombospondin-2 (THBS2) from Bos taurus (Bovine).